The following is a 119-amino-acid chain: Protein TusC (119 aa).

The protein belongs to the DsrF/TusC family. Heterohexamer, formed by a dimer of trimers. The hexameric TusBCD complex contains 2 copies each of TusB, TusC and TusD. The TusBCD complex interacts with TusE.

It localises to the cytoplasm. In terms of biological role, part of a sulfur-relay system required for 2-thiolation of 5-methylaminomethyl-2-thiouridine (mnm(5)s(2)U) at tRNA wobble positions. The sequence is that of Protein TusC from Buchnera aphidicola subsp. Schizaphis graminum (strain Sg).